A 210-amino-acid polypeptide reads, in one-letter code: Cytochrome c biogenesis ATP-binding export protein CcmA (210 aa).

The region spanning 1–208 (MHLNQLVISH…KVRTLSLDQF (208 aa)) is the ABC transporter domain. Residue 38–45 (GHNGIGKT) coordinates ATP.

The protein belongs to the ABC transporter superfamily. CcmA exporter (TC 3.A.1.107) family. In terms of assembly, the complex is composed of two ATP-binding proteins (CcmA) and two transmembrane proteins (CcmB).

Its subcellular location is the cell inner membrane. The catalysed reaction is heme b(in) + ATP + H2O = heme b(out) + ADP + phosphate + H(+). Part of the ABC transporter complex CcmAB involved in the biogenesis of c-type cytochromes; once thought to export heme, this seems not to be the case, but its exact role is uncertain. Responsible for energy coupling to the transport system. The protein is Cytochrome c biogenesis ATP-binding export protein CcmA of Haemophilus ducreyi (strain 35000HP / ATCC 700724).